The primary structure comprises 142 residues: Transcriptional regulator MraZ (142 aa).

2 consecutive SpoVT-AbrB domains span residues alanine 5–valine 51 and alanine 77–lysine 120.

Belongs to the MraZ family. Forms oligomers.

Its subcellular location is the cytoplasm. It is found in the nucleoid. This chain is Transcriptional regulator MraZ, found in Janthinobacterium sp. (strain Marseille) (Minibacterium massiliensis).